Here is a 265-residue protein sequence, read N- to C-terminus: Tetrapyrrole-binding protein, chloroplastic (265 aa).

The segment at 1–24 is disordered; the sequence is MATTNSLHHHHHSSPSYTHHRNNL. The N-terminal 69 residues, 1 to 69, are a transit peptide targeting the chloroplast; it reads MATTNSLHHH…TAVSAVSTTN (69 aa). Basic residues predominate over residues 7–23; it reads LHHHHHSSPSYTHHRNN.

As to quaternary structure, interacts with CHLH, the protoporphyrin IX-binding subunit of Mg-chelatase. Monomer or extremely compact dimer.

The protein resides in the plastid. It is found in the chloroplast membrane. In terms of biological role, regulates chlorophyll synthesis and plastid-to-nucleus signal transduction by binding both the product and the substrate of Mg-chelatase, an enzyme that produces magnesium-protoporphyrin IX (Mg-Proto). Also activates Mg-chelatase. Neither binds abscisic acid (ABA) nor is involved in ABA signaling. The protein is Tetrapyrrole-binding protein, chloroplastic (GUN4) of Arabidopsis thaliana (Mouse-ear cress).